The primary structure comprises 199 residues: Nitrile hydratase subunit alpha (199 aa).

Positions 102, 105, 106, and 107 each coordinate Fe(3+). A Cysteine sulfinic acid (-SO2H) modification is found at cysteine 105. Cysteine 107 is modified (cysteine sulfenic acid (-SOH)).

Belongs to the nitrile hydratase subunit alpha family. As to quaternary structure, heterodimer of an alpha and a beta chain. Fe(3+) is required as a cofactor. Oxidation on Cys-105 is essential for the activity. Post-translationally, oxidation on Cys-107 stabilizes the Fe-NO ligand coordinated in the inactive form.

The catalysed reaction is an aliphatic primary amide = an aliphatic nitrile + H2O. With respect to regulation, inactivated by oxidation of Cys-107 to a sulfenic acid. NHase catalyzes the hydration of various nitrile compounds to the corresponding amides. Industrial production of acrylamide is now being developed using some of the enzymes of this class. The protein is Nitrile hydratase subunit alpha (nthA) of Rhodococcus sp.